Reading from the N-terminus, the 518-residue chain is MSFKVNWNTLETDSLREWTSQLLTDALNSGKRPPILASDIQIKDLNFGKVAPDFEILDIGELDSDRFRGIFKINYSGDFHLTLHTRVQANPLTIYQENSNASDAAFVTPNFLLASDPFALPLDLKLSDIRISGIGIIVFSRLKGLTLVFRNDPLDSIKVTSTFDTVQVLAKFLQNQIETQIRDLFRETLPTLIHRLSLKYLSSDDSSFLDDLRPQLAALHEETVSLMDIDPDVPYSPENLSRVSALFKSRETLRLAVPKIRHSVQRCRLEKFTKTQPSLVRCLHDNLNLDLVAAPQHTNEIPVELVSGADFSKTNHVLREISSIQASNYYRSSSSRPKRRVIKLGSKKSSVKSTPSAETLASPIPSEMSSATASEHVSPTKYYQNDSHISLYHPKPRQADGAAALQLANPQSYLYHNVSSTPQLPSNSSLLAGIGLGNNYFNFASQSQISTSPIRRSSQELEDKKVTGKKSINHLDIAQLNSKLNATLHTIPDVKSHPGTGRKLDTGFEMPPPPPYQV.

Residues 1–198 enclose the SMP-LTD domain; it reads MSFKVNWNTL…LPTLIHRLSL (198 aa). Disordered stretches follow at residues 335 to 369 and 491 to 518; these read SRPKRRVIKLGSKKSSVKSTPSAETLASPIPSEMS and IPDVKSHPGTGRKLDTGFEMPPPPPYQV. A compositionally biased stretch (basic residues) spans 336 to 350; it reads RPKRRVIKLGSKKSS. Over residues 492-506 the composition is skewed to basic and acidic residues; it reads PDVKSHPGTGRKLDT.

Belongs to the MDM34 family. In terms of assembly, component of the ER-mitochondria encounter structure (ERMES) or MDM complex, composed of MMM1, MDM10, MDM12 and MDM34.

Its subcellular location is the mitochondrion outer membrane. In terms of biological role, component of the ERMES/MDM complex, which serves as a molecular tether to connect the endoplasmic reticulum (ER) and mitochondria. Components of this complex are involved in the control of mitochondrial shape and protein biogenesis, and function in nonvesicular lipid trafficking between the ER and mitochondria. MDM34 is required for the interaction of the ER-resident membrane protein MMM1 and the outer mitochondrial membrane-resident beta-barrel protein MDM10. The sequence is that of Mitochondrial distribution and morphology protein 34 from Meyerozyma guilliermondii (strain ATCC 6260 / CBS 566 / DSM 6381 / JCM 1539 / NBRC 10279 / NRRL Y-324) (Yeast).